A 337-amino-acid polypeptide reads, in one-letter code: Tert-butanol monooxygenase / tert-amyl alcohol desaturase reductase subunit (337 aa).

One can recognise an FAD-binding FR-type domain in the interval 9–114 (KYPKTALNLR…GHPRNNFPLI (106 aa)). The 2Fe-2S ferredoxin-type domain occupies 254–337 (FQIKIASTGT…SKGATLVLDL (84 aa)). Cys-288, Cys-293, Cys-296, and Cys-324 together coordinate [2Fe-2S] cluster.

Belongs to the PDR/VanB family. As to quaternary structure, this two-component enzyme is composed of an oxygenase (MdpJ) and a reductase (MdpK). It depends on [2Fe-2S] cluster as a cofactor.

Its function is as follows. Reductase component of a two-component system involved in the degradation of tertiary alcohols such as tert-butyl alcohol (TBA) and tert-amyl alcohol (TAA). MdpK probably provides electrons via its [2Fe-2S] iron-sulfur cluster to the MdpJ oxygenase subunit. This Aquincola tertiaricarbonis protein is Tert-butanol monooxygenase / tert-amyl alcohol desaturase reductase subunit.